Consider the following 125-residue polypeptide: MKTVIFILGFAFVAILIPTNGESMADADAMADADANAMSDASAYPDASSDALALANPEARAEAMAEAMAKALGDAVAEAQARAMAAAYAAAGKEKDKLIECTKEMLLAAMDYAKHKIEKHLFKCK.

An N-terminal signal peptide occupies residues 1-21 (MKTVIFILGFAFVAILIPTNG). A propeptide spanning residues 22–91 (ESMADADAMA…RAMAAAYAAA (70 aa)) is cleaved from the precursor. Cys-101 and Cys-124 are oxidised to a cystine.

The protein belongs to the formicidae venom precursor-01 superfamily. As to expression, expressed by the venom gland.

It is found in the secreted. It localises to the target cell membrane. Neurotoxin that causes irreversible rapid flaccid paralysis in blowflies and honeybees upon intrathoracic injection. Causes a quick and irreversible cytolytic effect (at 10 uM) indicating it possibly acts as a pore-forming peptide. Shows only weak effect on aphids (A.pisum) at high doses 24 hours post intrathoracic injection. In vitro, is not cytotoxic on the dipteran S2 Drosophila embryonic cell line. The chain is U11-myrmicitoxin-Ta1a from Tetramorium africanum (Fierce ant).